The primary structure comprises 218 residues: MSVQTYLVAYNVLQILGWSAILVKTVLGLANGLTWPQLYESVEFELKIFQTAAILEVIHAIVGLVRSPVGTTAMQVTSRVVLVWPILHLCSTARFSIGVPLLLVAWSVTEVIRYSFYALSVLKQPIPYFLLYLRYTLFYVLYPMGVSGELLTLFASLNEVDEKKILTLEMPNRLNMGISFWWVLIIAALSYIPGFPQLYFYMIGQRKKILGGGSKKKQ.

The next 5 membrane-spanning stretches (helical) occupy residues 15–35 (ILGWSAILVKTVLGLANGLTW), 44–64 (FELKIFQTAAILEVIHAIVGL), 86–106 (ILHLCSTARFSIGVPLLLVAW), 137–157 (LFYVLYPMGVSGELLTLFASL), and 176–196 (MGISFWWVLIIAALSYIPGFP). Catalysis depends on residues Tyr-142 and Glu-149.

This sequence belongs to the very long-chain fatty acids dehydratase HACD family.

The protein resides in the membrane. It catalyses the reaction a very-long-chain (3R)-3-hydroxyacyl-CoA = a very-long-chain (2E)-enoyl-CoA + H2O. The protein operates within lipid metabolism; fatty acid biosynthesis. In terms of biological role, catalyzes the third of the four reactions of the long-chain fatty acids elongation cycle. This endoplasmic reticulum-bound enzymatic process, allows the addition of two carbons to the chain of long- and very long-chain fatty acids/VLCFAs per cycle. This enzyme catalyzes the dehydration of the 3-hydroxyacyl-CoA intermediate into trans-2,3-enoyl-CoA, within each cycle of fatty acid elongation. Thereby, it participates in the production of VLCFAs of different chain lengths that are involved in multiple biological processes as precursors of membrane lipids and lipid mediators. The sequence is that of Very-long-chain (3R)-3-hydroxyacyl-CoA dehydratase hpo-8 (hpo-8) from Caenorhabditis elegans.